The primary structure comprises 276 residues: 2-dehydro-3-deoxyphosphooctonate aldolase (276 aa).

It belongs to the KdsA family.

It is found in the cytoplasm. The enzyme catalyses D-arabinose 5-phosphate + phosphoenolpyruvate + H2O = 3-deoxy-alpha-D-manno-2-octulosonate-8-phosphate + phosphate. It functions in the pathway carbohydrate biosynthesis; 3-deoxy-D-manno-octulosonate biosynthesis; 3-deoxy-D-manno-octulosonate from D-ribulose 5-phosphate: step 2/3. It participates in bacterial outer membrane biogenesis; lipopolysaccharide biosynthesis. The polypeptide is 2-dehydro-3-deoxyphosphooctonate aldolase (Stenotrophomonas maltophilia (strain R551-3)).